A 157-amino-acid polypeptide reads, in one-letter code: Cyclic pyranopterin monophosphate synthase (157 aa).

Substrate is bound by residues 74 to 76 (MCH) and 112 to 113 (ME). Asp-127 is a catalytic residue.

The protein belongs to the MoaC family. As to quaternary structure, homohexamer; trimer of dimers.

It carries out the reaction (8S)-3',8-cyclo-7,8-dihydroguanosine 5'-triphosphate = cyclic pyranopterin phosphate + diphosphate. It functions in the pathway cofactor biosynthesis; molybdopterin biosynthesis. Its function is as follows. Catalyzes the conversion of (8S)-3',8-cyclo-7,8-dihydroguanosine 5'-triphosphate to cyclic pyranopterin monophosphate (cPMP). In Campylobacter jejuni subsp. jejuni serotype O:6 (strain 81116 / NCTC 11828), this protein is Cyclic pyranopterin monophosphate synthase.